A 105-amino-acid chain; its full sequence is N(4)-acetylcytidine amidohydrolase (105 aa).

The 87-residue stretch at 7–93 folds into the ASCH domain; that stretch reads TFFERFEHDI…VIAEIYPGLE (87 aa). The active-site Proton acceptor is the Lys-21. Thr-24 acts as the Nucleophile in catalysis. Glu-74 (proton donor) is an active-site residue.

It belongs to the N(4)-acetylcytidine amidohydrolase family.

It catalyses the reaction N(4)-acetylcytidine + H2O = cytidine + acetate + H(+). The enzyme catalyses N(4)-acetyl-2'-deoxycytidine + H2O = 2'-deoxycytidine + acetate + H(+). The catalysed reaction is N(4)-acetylcytosine + H2O = cytosine + acetate + H(+). Functionally, catalyzes the hydrolysis of N(4)-acetylcytidine (ac4C). This is N(4)-acetylcytidine amidohydrolase from Shewanella baltica (strain OS223).